Consider the following 138-residue polypeptide: Putative pre-16S rRNA nuclease (138 aa).

The protein belongs to the YqgF nuclease family.

It is found in the cytoplasm. In terms of biological role, could be a nuclease involved in processing of the 5'-end of pre-16S rRNA. The chain is Putative pre-16S rRNA nuclease from Escherichia fergusonii (strain ATCC 35469 / DSM 13698 / CCUG 18766 / IAM 14443 / JCM 21226 / LMG 7866 / NBRC 102419 / NCTC 12128 / CDC 0568-73).